The primary structure comprises 228 residues: Lipoprotein-releasing system ATP-binding protein LolD (228 aa).

Residues 8-228 (LQAKKLVKAY…ELHDGLLRRL (221 aa)) form the ABC transporter domain. Residue 44-51 (GASGSGKS) coordinates ATP.

It belongs to the ABC transporter superfamily. Lipoprotein translocase (TC 3.A.1.125) family. The complex is composed of two ATP-binding proteins (LolD) and two transmembrane proteins (LolC and LolE).

The protein resides in the cell inner membrane. Its function is as follows. Part of the ABC transporter complex LolCDE involved in the translocation of mature outer membrane-directed lipoproteins, from the inner membrane to the periplasmic chaperone, LolA. Responsible for the formation of the LolA-lipoprotein complex in an ATP-dependent manner. This Alcanivorax borkumensis (strain ATCC 700651 / DSM 11573 / NCIMB 13689 / SK2) protein is Lipoprotein-releasing system ATP-binding protein LolD.